Consider the following 694-residue polypeptide: Cyclic nucleotide-gated channel beta-3 (694 aa).

The Cytoplasmic portion of the chain corresponds to 1 to 210; the sequence is MLKSLTVKFN…SIDSYTDRVY (210 aa). Disordered stretches follow at residues 24-82 and 146-177; these read CPNL…DPEC and ENFPEVEASSQTAMSTNISPKQENNSKLKEHQ. Composition is skewed to polar residues over residues 26-40 and 153-168; these read NLSSLSQPTIAQGDN and ASSQTAMSTNISPKQE. The helical transmembrane segment at 211–234 threads the bilayer; the sequence is LLWLLLVTIAYNWNCWLLPVRLVF. Residues 235–241 are Extracellular-facing; sequence PCQTPDN. Residues 242-262 form a helical membrane-spanning segment; that stretch reads KNYWIITDIVCDIIYLCDILL. Residues 263-291 lie on the Cytoplasmic side of the membrane; sequence IQPRLQFVRGGEIIVDSNELKRNYRSSTK. A helical transmembrane segment spans residues 292–309; it reads FRMDVASLLPFEVLYIFF. The Extracellular portion of the chain corresponds to 310 to 312; that stretch reads GVN. Residues 313–327 form a helical membrane-spanning segment; the sequence is PIFRANRILKYTSFF. The Cytoplasmic segment spans residues 328–340; the sequence is EFNHHLESIMDKA. The ion conduction pathway stretch occupies residues 340–439; sequence AYVYRVIRTT…IGQMRDVIGA (100 aa). A helical transmembrane segment spans residues 341-363; it reads YVYRVIRTTGYLLFLLHINACVY. Topologically, residues 364-385 are extracellular; that stretch reads YWASDYEGIGSTKWVYNGEGNK. 2 consecutive transmembrane segments (helical) span residues 386–412 and 413–437; these read YLRCFYWAVRTLITIGGLPEPQTSFEI and VFQFLNFFSGVFVFSSLIGQMRDVI. The selectivity filter stretch occupies residues 399 to 402; the sequence is TIGG. The Cytoplasmic portion of the chain corresponds to 438–694; it reads GAATANQNYF…KGKRKTTTQK (257 aa). The segment at 442–518 is C-linker; the sequence is ANQNYFQACM…SIIDKVELFK (77 aa). The interval 522 to 638 is cyclic nucleotide-binding domain; it reads TQMIYDLLLR…LLMKKAKILL (117 aa). 3',5'-cyclic GMP contacts are provided by Gly583, Glu584, Arg596, and Thr597.

The protein belongs to the cyclic nucleotide-gated cation channel (TC 1.A.1.5) family. CNGB3 subfamily. In terms of assembly, forms heterotetrameric channels composed of CNGA3 and CNGB3 subunits with 3:1 stoichiometry. As to expression, small subset of retinal photoreceptor cells and testis.

It localises to the cell membrane. The catalysed reaction is Ca(2+)(in) = Ca(2+)(out). The enzyme catalyses Na(+)(in) = Na(+)(out). It catalyses the reaction K(+)(in) = K(+)(out). It carries out the reaction NH4(+)(in) = NH4(+)(out). The catalysed reaction is Rb(+)(in) = Rb(+)(out). The enzyme catalyses Li(+)(in) = Li(+)(out). It catalyses the reaction Cs(+)(in) = Cs(+)(out). Its function is as follows. Pore-forming subunit of the cone cyclic nucleotide-gated channel. Mediates cone photoresponses at bright light converting transient changes in intracellular cGMP levels into electrical signals. In the dark, cGMP levels are high and keep the channel open enabling a steady inward current carried by Na(+) and Ca(2+) ions that leads to membrane depolarization and neurotransmitter release from synaptic terminals. Upon photon absorption cGMP levels decline leading to channel closure and membrane hyperpolarization that ultimately slows neurotransmitter release and signals the presence of light, the end point of the phototransduction cascade. Conducts cGMP- and cAMP-gated ion currents, with permeability for monovalent and divalent cations. This chain is Cyclic nucleotide-gated channel beta-3, found in Mus musculus (Mouse).